The chain runs to 211 residues: Ribosomal RNA small subunit methyltransferase G (211 aa).

Residues Gly72, Phe77, 125-126 (IE), and Arg141 each bind S-adenosyl-L-methionine.

The protein belongs to the methyltransferase superfamily. RNA methyltransferase RsmG family.

The protein resides in the cytoplasm. The enzyme catalyses guanosine(527) in 16S rRNA + S-adenosyl-L-methionine = N(7)-methylguanosine(527) in 16S rRNA + S-adenosyl-L-homocysteine. Functionally, specifically methylates the N7 position of guanine in position 527 of 16S rRNA. The polypeptide is Ribosomal RNA small subunit methyltransferase G (Allorhizobium ampelinum (strain ATCC BAA-846 / DSM 112012 / S4) (Agrobacterium vitis (strain S4))).